The primary structure comprises 279 residues: Polyamine aminopropyltransferase (279 aa).

In terms of domain architecture, PABS spans 4–237 (IEWYPRGYGV…SPWAFLVGIK (234 aa)). Gln29 contributes to the S-methyl-5'-thioadenosine binding site. Spermidine contacts are provided by His60 and Asp84. S-methyl-5'-thioadenosine contacts are provided by residues Glu104 and 141–142 (DG). Catalysis depends on Asp158, which acts as the Proton acceptor. 158 to 161 (DSTD) provides a ligand contact to spermidine. Pro165 serves as a coordination point for S-methyl-5'-thioadenosine.

This sequence belongs to the spermidine/spermine synthase family. Homodimer or homotetramer.

The protein localises to the cytoplasm. The catalysed reaction is S-adenosyl 3-(methylsulfanyl)propylamine + putrescine = S-methyl-5'-thioadenosine + spermidine + H(+). It functions in the pathway amine and polyamine biosynthesis; spermidine biosynthesis; spermidine from putrescine: step 1/1. Its function is as follows. Catalyzes the irreversible transfer of a propylamine group from the amino donor S-adenosylmethioninamine (decarboxy-AdoMet) to putrescine (1,4-diaminobutane) to yield spermidine. The protein is Polyamine aminopropyltransferase of Pyrococcus abyssi (strain GE5 / Orsay).